The sequence spans 142 residues: Transcriptional regulator MraZ (142 aa).

SpoVT-AbrB domains are found at residues 5-47 (EYQH…TINE) and 76-119 (ACIV…SREK).

This sequence belongs to the MraZ family. In terms of assembly, forms oligomers.

It is found in the cytoplasm. It localises to the nucleoid. In Clostridium botulinum (strain Alaska E43 / Type E3), this protein is Transcriptional regulator MraZ.